The following is a 153-amino-acid chain: Myosin regulatory light chain, smooth muscle (153 aa).

3 consecutive EF-hand domains span residues 12–47, 81–116, and 117–152; these read SQIQ…LGRG, DPEE…QADR, and FSQS…GQEE. 4 residues coordinate Ca(2+): Asp25, Asn27, Asp29, and Asp36.

Functionally, in molluscan muscle, calcium regulation is associated with myosin rather than with actin. Muscle myosin contains two types of light chains: the catalytic light chain, essential for ATPase activity, and the regulatory light chain, a calcium-binding protein responsible for Ca(2+) dependent binding and Ca(2+) dependent Mg-ATPase activity. In Halocynthia roretzi (Sea squirt), this protein is Myosin regulatory light chain, smooth muscle.